The chain runs to 342 residues: Cytosolic Fe-S cluster assembly factor NBP35 (342 aa).

A disordered region spans residues 16-42; the sequence is SKAAPKLVAPEPEHCPGPESEQAGKGD. The [4Fe-4S] cluster site is built by Cys30, Cys44, Cys47, and Cys53. Residue 83–90 participates in ATP binding; the sequence is GKGGVGKS. The [4Fe-4S] cluster site is built by Cys256 and Cys259.

It belongs to the Mrp/NBP35 ATP-binding proteins family. NUBP1/NBP35 subfamily. Heterotetramer of 2 NBP35 and 2 CFD1 chains. It depends on [4Fe-4S] cluster as a cofactor.

It is found in the cytoplasm. In terms of biological role, component of the cytosolic iron-sulfur (Fe/S) protein assembly (CIA) machinery. Required for maturation of extramitochondrial Fe-S proteins. The NBP35-CFD1 heterotetramer forms a Fe-S scaffold complex, mediating the de novo assembly of an Fe-S cluster and its transfer to target apoproteins. The polypeptide is Cytosolic Fe-S cluster assembly factor NBP35 (Coccidioides immitis (strain RS) (Valley fever fungus)).